Here is a 219-residue protein sequence, read N- to C-terminus: MMASLFSVFDPTSSFLSNWLSMLIPLLFMVMSFWLIPSRPQFLAKSVLMGLNREMSLLMGPASFGANILVIALFLFILFNNFIGLFPYIFTATSHLAVTLSLAVPLWISFILYTWIKETTNALAHLVPLGTPAPLMPFMVLMEIISNMIRPITLSVRLAANMIAGHLLLTLLGAQGTLENLYVTSIVVFSQIILLMLEFSVAIIQSYVFMTLMTLYASE.

6 helical membrane passes run 16–36, 57–79, 96–116, 122–142, 158–178, and 184–204; these read LSNW…FWLI, LLMG…FILF, LAVT…YTWI, ALAH…MVLM, LAAN…QGTL, and TSIV…VAII.

It belongs to the ATPase A chain family. F-type ATPases have 2 components, CF(1) - the catalytic core - and CF(0) - the membrane proton channel. CF(1) has five subunits: alpha(3), beta(3), gamma(1), delta(1), epsilon(1). CF(0) has three main subunits: a, b and c.

The protein resides in the mitochondrion inner membrane. Its function is as follows. Mitochondrial membrane ATP synthase (F(1)F(0) ATP synthase or Complex V) produces ATP from ADP in the presence of a proton gradient across the membrane which is generated by electron transport complexes of the respiratory chain. F-type ATPases consist of two structural domains, F(1) - containing the extramembraneous catalytic core and F(0) - containing the membrane proton channel, linked together by a central stalk and a peripheral stalk. During catalysis, ATP synthesis in the catalytic domain of F(1) is coupled via a rotary mechanism of the central stalk subunits to proton translocation. Key component of the proton channel; it may play a direct role in the translocation of protons across the membrane. The polypeptide is ATP synthase subunit a (ATP6) (Artemia franciscana (Brine shrimp)).